A 169-amino-acid chain; its full sequence is Large ribosomal subunit protein uL15 (169 aa).

Residues 1-13 (MKLNEIRDNEGAT) are compositionally biased toward basic and acidic residues. Residues 1-40 (MKLNEIRDNEGATKNRMRVGRGIGSGKGKTGGRGVKGQKA) form a disordered region. Gly residues predominate over residues 21-35 (RGIGSGKGKTGGRGV).

It belongs to the universal ribosomal protein uL15 family. In terms of assembly, part of the 50S ribosomal subunit.

Binds to the 23S rRNA. The polypeptide is Large ribosomal subunit protein uL15 (Methylorubrum populi (strain ATCC BAA-705 / NCIMB 13946 / BJ001) (Methylobacterium populi)).